A 1509-amino-acid chain; its full sequence is Myosin-2 heavy chain, non muscle (1509 aa).

The region spanning 32 to 85 is the Myosin N-terminal SH3-like domain; it reads SDKTLAWWPTKDADRAFCHVEVTKDDGKNFTVRLENGEEKSQPKNEKNFLGVNP. One can recognise a Myosin motor domain in the interval 89-787; that stretch reads DGVEDMGELG…QLAAIEELRE (699 aa). Lys133 carries the post-translational modification N6,N6,N6-trimethyllysine. Residue 182–189 coordinates ATP; sequence GESGAGKT. The segment at 623–643 is disordered; that stretch reads APAEEEKAAAGGSRNRSTGRG. Actin-binding regions lie at residues 660-682 and 766-780; these read LAHL…IPNL and RFGV…GQLA. One can recognise an IQ domain in the interval 790 to 819; the sequence is ISKMVVSIQAGARAFLARRMYDKMREQTVS. The interval 848–1226 is alpha-helical tailpiece (S2); that stretch reads LISQRNFQKE…AERDSGAQQR (379 aa). The stretch at 848-1509 forms a coiled coil; that stretch reads LISQRNFQKE…VRAGSARAEE (662 aa). Composition is skewed to basic and acidic residues over residues 958-1019, 1034-1047, 1097-1107, 1115-1141, and 1179-1189; these read ELKA…KDAL, KNTE…RNEL, EDARSEVDSLK, KSLK…RANV, and QVDETKRRLEE. 6 disordered regions span residues 958-1049, 1068-1141, 1170-1195, 1213-1259, 1352-1425, and 1474-1509; these read ELKA…ELDD, LAQT…RANV, AAQA…ASAA, ADLD…RLEG, VAKE…NREL, and QLQD…RAEE. Residues 1227–1252 are hinge; sequence RKLNTRISELQSELENAPKTGGASSE. The span at 1231–1240 shows a compositional bias: polar residues; that stretch reads TRISELQSEL. The tract at residues 1253–1482 is alpha-helical tailpiece (LMM); that stretch reads EVKRLEGELE…AQLQDEIDGT (230 aa). Positions 1253-1509 are light meromyosin (LMM); the sequence is EVKRLEGELE…VRAGSARAEE (257 aa). Positions 1483–1509 are nonhelical tailpiece; it reads PSSRGGSTRGASARGASVRAGSARAEE. Residues 1484–1509 show a composition bias toward low complexity; it reads SSRGGSTRGASARGASVRAGSARAEE. Phosphoserine occurs at positions 1489, 1494, and 1499.

It belongs to the TRAFAC class myosin-kinesin ATPase superfamily. Myosin family. As to quaternary structure, myosin II heavy chain is two-headed. It self-assembles into filaments. Hexamer of 2 heavy chain subunits (MHC), 2 alkali light chain subunits (MLC) and 2 regulatory light chain subunits (MLC-2).

Myosin is a protein that binds to F-actin and has ATPase activity that is activated by F-actin. This chain is Myosin-2 heavy chain, non muscle, found in Acanthamoeba castellanii (Amoeba).